Here is a 206-residue protein sequence, read N- to C-terminus: Pyridoxine/pyridoxamine 5'-phosphate oxidase (206 aa).

Residues R53–K58, Y68–T69, K75, and Q97 each bind FMN. K58 is a binding site for substrate. The substrate site is built by Y115, R119, and S123. Residues Q132–S133 and W177 each bind FMN. R183–H185 lines the substrate pocket. R187 lines the FMN pocket.

This sequence belongs to the pyridoxamine 5'-phosphate oxidase family. As to quaternary structure, homodimer. It depends on FMN as a cofactor.

The catalysed reaction is pyridoxamine 5'-phosphate + O2 + H2O = pyridoxal 5'-phosphate + H2O2 + NH4(+). The enzyme catalyses pyridoxine 5'-phosphate + O2 = pyridoxal 5'-phosphate + H2O2. It functions in the pathway cofactor metabolism; pyridoxal 5'-phosphate salvage; pyridoxal 5'-phosphate from pyridoxamine 5'-phosphate: step 1/1. Its pathway is cofactor metabolism; pyridoxal 5'-phosphate salvage; pyridoxal 5'-phosphate from pyridoxine 5'-phosphate: step 1/1. Its function is as follows. Catalyzes the oxidation of either pyridoxine 5'-phosphate (PNP) or pyridoxamine 5'-phosphate (PMP) into pyridoxal 5'-phosphate (PLP). The sequence is that of Pyridoxine/pyridoxamine 5'-phosphate oxidase from Rhizobium etli (strain ATCC 51251 / DSM 11541 / JCM 21823 / NBRC 15573 / CFN 42).